Consider the following 196-residue polypeptide: Imidazoleglycerol-phosphate dehydratase (196 aa).

Belongs to the imidazoleglycerol-phosphate dehydratase family.

The protein localises to the cytoplasm. The catalysed reaction is D-erythro-1-(imidazol-4-yl)glycerol 3-phosphate = 3-(imidazol-4-yl)-2-oxopropyl phosphate + H2O. It participates in amino-acid biosynthesis; L-histidine biosynthesis; L-histidine from 5-phospho-alpha-D-ribose 1-diphosphate: step 6/9. This Caulobacter sp. (strain K31) protein is Imidazoleglycerol-phosphate dehydratase.